Consider the following 333-residue polypeptide: MFARDIGIDLGTANVLIHVKGKGIVLNEPSVVAIDRNTGKVLAVGEEARSMVGRTPGNIVAIRPLKDGVIADFEITEAMLKYFINKLDVKSFFSKPRILICCPTNITSVEQKAIREAAERSGGKTVFLEEEPKVAAVGAGMEIFQPSGNMVVDIGGGTTDIAVLSMGDIVTSSSIKMAGDKFDMEILNYIKRKYKLLIGERTSEDIKIKVGTVFPGARSEELEIRGRDMVTGLPRTITVCSEEITEALKENAAVIVQAAKGVLERTPPELSADIIDRGVILTGGGALLHGIDMLLAEELKVPVLIAENPMHCVAVGTGIMLENIDRLPKRALR.

ATP-binding positions include 12–14 (TAN), 156–158 (GGT), 204–207 (EDIK), and 284–287 (GGAL).

The protein belongs to the FtsA/MreB family. In terms of assembly, forms polymers.

The protein resides in the cytoplasm. Forms membrane-associated dynamic filaments that are essential for cell shape determination. Acts by regulating cell wall synthesis and cell elongation, and thus cell shape. A feedback loop between cell geometry and Mbl localization may maintain elongated cell shape by targeting cell wall growth to regions of negative cell wall curvature. This Bacillus cereus (strain ATCC 10987 / NRS 248) protein is Cell shape-determining protein Mbl.